The following is a 251-amino-acid chain: MNNRILLNIKNLDVTIGETQILNSLNLSIKPGEIHAIMGKNGSGKSTLAKVIAGHPSYKITNGQILFENQDVTEIEPEDRSHLGIFLAFQYPVEIPGVTNADFLRIAYNAKRAFDNKEELDPLSFFSFIENKISNIDLNSTFLSRNVNEGFSGGEKKKNEILQMSLLNSKLAILDETDSGLDIDALKTIAKQINSLKTQENSIILITHYQRLLDYIKPDYIHVMQKGEIIYTGGSDTAMKLEKYGYDYLNK.

Residues 7–251 (LNIKNLDVTI…EKYGYDYLNK (245 aa)) form the ABC transporter domain. 39 to 46 (GKNGSGKS) contacts ATP.

The protein belongs to the ABC transporter superfamily. Ycf16 family.

The protein localises to the plastid. It is found in the chloroplast. This Antithamnion sp. (Red alga) protein is Probable ATP-dependent transporter ycf16 (ycf16).